We begin with the raw amino-acid sequence, 258 residues long: UPF0246 protein LHK_02295 (258 aa).

Belongs to the UPF0246 family.

This is UPF0246 protein LHK_02295 from Laribacter hongkongensis (strain HLHK9).